A 123-amino-acid polypeptide reads, in one-letter code: Putative EG45-like domain containing protein 1 (123 aa).

The N-terminal stretch at 1–21 (MSKSIVFFSTVLVFLFSFSYA) is a signal peptide. Positions 24–123 (GIATFYTSYT…AGIINIDYFP (100 aa)) constitute an Expansin-like EG45 domain.

It localises to the secreted. Functionally, might have a systemic role in water and solute homeostasis. The sequence is that of Putative EG45-like domain containing protein 1 (EGC1) from Arabidopsis thaliana (Mouse-ear cress).